Consider the following 401-residue polypeptide: E3 ubiquitin-protein ligase NHLRC1 (401 aa).

The segment at Cys-28–Arg-74 adopts an RING-type zinc-finger fold. 6 NHL repeats span residues Thr-115–Gly-159, Ala-163–Phe-206, Gly-207–Asp-247, Glu-250–Thr-303, Met-304–Pro-352, and Glu-353–Met-396.

Interacts with AGL. Interacts (via the NHL repeats) with EPM2A/laforin. Forms a complex with EPM2A/laforin and HSP70. Interacts with PRDM8.

Its subcellular location is the endoplasmic reticulum. The protein resides in the nucleus. It catalyses the reaction S-ubiquitinyl-[E2 ubiquitin-conjugating enzyme]-L-cysteine + [acceptor protein]-L-lysine = [E2 ubiquitin-conjugating enzyme]-L-cysteine + N(6)-ubiquitinyl-[acceptor protein]-L-lysine.. It participates in protein modification; protein ubiquitination. Its function is as follows. E3 ubiquitin-protein ligase. Together with the phosphatase EPM2A/laforin, appears to be involved in the clearance of toxic polyglucosan and protein aggregates via multiple pathways. In complex with EPM2A/laforin and HSP70, suppresses the cellular toxicity of misfolded proteins by promoting their degradation through the ubiquitin-proteasome system (UPS). Ubiquitinates the glycogen-targeting protein phosphatase subunits PPP1R3C/PTG and PPP1R3D in a laforin-dependent manner and targets them for proteasome-dependent degradation, thus decreasing glycogen accumulation. Polyubiquitinates EPM2A/laforin and ubiquitinates AGL and targets them for proteasome-dependent degradation. Also promotes proteasome-independent protein degradation through the macroautophagy pathway. The protein is E3 ubiquitin-protein ligase NHLRC1 (Nhlrc1) of Mus musculus (Mouse).